Consider the following 251-residue polypeptide: Sugar fermentation stimulation protein homolog (251 aa).

It belongs to the SfsA family.

The polypeptide is Sugar fermentation stimulation protein homolog (Symbiobacterium thermophilum (strain DSM 24528 / JCM 14929 / IAM 14863 / T)).